Consider the following 183-residue polypeptide: GMP synthase [glutamine-hydrolyzing] subunit A (183 aa).

Positions 3–183 (HILVVDNHGQ…VFENFVAICE (181 aa)) constitute a Glutamine amidotransferase type-1 domain. Catalysis depends on C74, which acts as the Nucleophile. Catalysis depends on residues H162 and E164.

As to quaternary structure, heterodimer composed of a glutamine amidotransferase subunit (A) and a GMP-binding subunit (B).

The enzyme catalyses XMP + L-glutamine + ATP + H2O = GMP + L-glutamate + AMP + diphosphate + 2 H(+). It participates in purine metabolism; GMP biosynthesis; GMP from XMP (L-Gln route): step 1/1. Functionally, catalyzes the synthesis of GMP from XMP. This chain is GMP synthase [glutamine-hydrolyzing] subunit A, found in Halobacterium salinarum (strain ATCC 700922 / JCM 11081 / NRC-1) (Halobacterium halobium).